We begin with the raw amino-acid sequence, 318 residues long: Ribose-phosphate pyrophosphokinase 1 (318 aa).

96 to 101 (RQDKKD) contacts ATP. Positions 128, 130, 139, and 143 each coordinate Mg(2+). Residue histidine 130 participates in ATP binding. The binding of phosphoribosylpyrophosphate stretch occupies residues 212-227 (KDRVAILVDDMADTCG).

This sequence belongs to the ribose-phosphate pyrophosphokinase family. As to quaternary structure, homodimer. The active form is probably a hexamer composed of 3 homodimers. It depends on Mg(2+) as a cofactor.

The catalysed reaction is D-ribose 5-phosphate + ATP = 5-phospho-alpha-D-ribose 1-diphosphate + AMP + H(+). The protein operates within metabolic intermediate biosynthesis; 5-phospho-alpha-D-ribose 1-diphosphate biosynthesis; 5-phospho-alpha-D-ribose 1-diphosphate from D-ribose 5-phosphate (route I): step 1/1. With respect to regulation, activated by magnesium and inorganic phosphate. In terms of biological role, catalyzes the synthesis of phosphoribosylpyrophosphate (PRPP) that is essential for nucleotide synthesis. The chain is Ribose-phosphate pyrophosphokinase 1 (PRPS1) from Bos taurus (Bovine).